Reading from the N-terminus, the 47-residue chain is Large ribosomal subunit protein eL40 (47 aa).

It belongs to the eukaryotic ribosomal protein eL40 family.

The protein is Large ribosomal subunit protein eL40 of Halobacterium salinarum (strain ATCC 29341 / DSM 671 / R1).